The following is a 270-amino-acid chain: Diaminopimelate epimerase (270 aa).

Residues Asn-15, Gln-49, and Asn-66 each coordinate substrate. Cys-75 acts as the Proton donor in catalysis. Residues 76–77 (GN), Asn-155, Asn-187, and 204–205 (ER) contribute to the substrate site. The Proton acceptor role is filled by Cys-213. 214 to 215 (GS) provides a ligand contact to substrate.

This sequence belongs to the diaminopimelate epimerase family. As to quaternary structure, homodimer.

The protein resides in the cytoplasm. The catalysed reaction is (2S,6S)-2,6-diaminopimelate = meso-2,6-diaminopimelate. The protein operates within amino-acid biosynthesis; L-lysine biosynthesis via DAP pathway; DL-2,6-diaminopimelate from LL-2,6-diaminopimelate: step 1/1. Functionally, catalyzes the stereoinversion of LL-2,6-diaminopimelate (L,L-DAP) to meso-diaminopimelate (meso-DAP), a precursor of L-lysine and an essential component of the bacterial peptidoglycan. In Rickettsia massiliae (strain Mtu5), this protein is Diaminopimelate epimerase.